A 118-amino-acid polypeptide reads, in one-letter code: Hydrogenase maturation factor HypA (118 aa).

Residue His-2 participates in Ni(2+) binding. Zn(2+) contacts are provided by Cys-73, Cys-76, Cys-89, and Cys-92.

It belongs to the HypA/HybF family.

Its function is as follows. Involved in the maturation of [NiFe] hydrogenases. Required for nickel insertion into the metal center of the hydrogenase. The polypeptide is Hydrogenase maturation factor HypA (Shewanella sp. (strain MR-7)).